The sequence spans 348 residues: Rhodopsin (348 aa).

Methionine 1 carries the N-acetylmethionine modification. Over 1–36 (MNGTEGPNFYVPFSNKTGVVRSPFEYPQYYLAEPWQ) the chain is Extracellular. N-linked (GlcNAc...) asparagine glycosylation is found at asparagine 2 and asparagine 15. Residues 37–61 (FSMLAAYMFLLIVLGFPINFLTLYV) form a helical membrane-spanning segment. The Cytoplasmic segment spans residues 62-73 (TVQHKKLRTPLN). Residues 74 to 96 (YILLNLAVADLFMVFGGFTTTLY) traverse the membrane as a helical segment. The Extracellular portion of the chain corresponds to 97–110 (TSLHGYFVFGPTGC). Residues cysteine 110 and cysteine 187 are joined by a disulfide bond. The chain crosses the membrane as a helical span at residues 111 to 133 (NLEGFFATLGGEIALWSLVVLAI). The short motif at 134–136 (ERY) is the 'Ionic lock' involved in activated form stabilization element. Residues 134-152 (ERYVVVCKPMSNFRFGENH) lie on the Cytoplasmic side of the membrane. Residues 153 to 173 (AIMGVAFTWVMALACAAPPLV) form a helical membrane-spanning segment. The Extracellular segment spans residues 174 to 202 (GWSRYIPEGMQCSCGIDYYTLKPEVNNES). Position 201 (glutamate 201) interacts with Zn(2+). The chain crosses the membrane as a helical span at residues 203-224 (FVIYMFVVHFTIPMIVIFFCYG). The Cytoplasmic segment spans residues 225 to 252 (QLVFTVKEAAAQQQESATTQKAEKEVTR). The helical transmembrane segment at 253 to 274 (MVIIMVIAFLICWVPYASVAFY) threads the bilayer. Topologically, residues 275-286 (IFTHQGSNFGPI) are extracellular. Residue glutamine 279 participates in Zn(2+) binding. The helical transmembrane segment at 287–308 (FMTLPAFFAKSSSIYNPVIYIM) threads the bilayer. At lysine 296 the chain carries N6-(retinylidene)lysine. Residues 309–348 (MNKQFRNCMLTTLCCGKNPLGDDEASTTGSKTETSQVAPA) lie on the Cytoplasmic side of the membrane. Residues cysteine 322 and cysteine 323 are each lipidated (S-palmitoyl cysteine). Residues 330-348 (DDEASTTGSKTETSQVAPA) form an interaction with SAG region. Phosphoserine is present on serine 334. Phosphothreonine occurs at positions 335 and 336. At serine 338 the chain carries Phosphoserine. Residues threonine 340 and threonine 342 each carry the phosphothreonine modification. Phosphoserine is present on serine 343.

It belongs to the G-protein coupled receptor 1 family. Opsin subfamily. In terms of assembly, homodimer. May form a complex composed of RHO, GRK1 and RCVRN in a Ca(2+)-dependent manner; RCVRN prevents the interaction between GRK1 and RHO. Interacts with GRK1. Interacts (phosphorylated form) with SAG. Interacts with GNAT1. Interacts with GNAT3. SAG and G-proteins compete for a common binding site. Interacts with PRCD; the interaction promotes PRCD stability. Forms a complex with ASAP1 and ARF4. Forms a complex with ASAP1, RAB11A, Rabin8/RAB3IP, ARF4 and RAB11FIP3; the complex regulates Golgi-to-cilia rhodopsin/RHO transport in photoreceptors. Phosphorylated on some or all of the serine and threonine residues present in the C-terminal region. Post-translationally, contains one covalently linked retinal chromophore. Upon light absorption, the covalently bound 11-cis-retinal is converted to all-trans-retinal. After hydrolysis of the Schiff base and release of the covalently bound all-trans-retinal, active rhodopsin is regenerated by binding of a fresh molecule of 11-cis-retinal.

It is found in the membrane. Its subcellular location is the cell projection. The protein resides in the cilium. The protein localises to the photoreceptor outer segment. In terms of biological role, photoreceptor required for image-forming vision at low light intensity. Required for photoreceptor cell viability after birth. Light-induced isomerization of 11-cis to all-trans retinal triggers a conformational change that activates signaling via G-proteins. Subsequent receptor phosphorylation mediates displacement of the bound G-protein alpha subunit by the arrestin SAG and terminates signaling. The chain is Rhodopsin (RHO) from Felis catus (Cat).